Consider the following 529-residue polypeptide: Peptide chain release factor 3 (529 aa).

The 270-residue stretch at 11–280 folds into the tr-type G domain; sequence AKRRTFAIIS…GLVAWAPAPM (270 aa). GTP-binding positions include 20 to 27, 88 to 92, and 142 to 145; these read SHPDAGKT, DTPGH, and NKLD.

This sequence belongs to the TRAFAC class translation factor GTPase superfamily. Classic translation factor GTPase family. PrfC subfamily.

Its subcellular location is the cytoplasm. Functionally, increases the formation of ribosomal termination complexes and stimulates activities of RF-1 and RF-2. It binds guanine nucleotides and has strong preference for UGA stop codons. It may interact directly with the ribosome. The stimulation of RF-1 and RF-2 is significantly reduced by GTP and GDP, but not by GMP. The sequence is that of Peptide chain release factor 3 from Edwardsiella ictaluri (strain 93-146).